The following is a 109-amino-acid chain: Guanylin (109 aa).

Residues 1–21 form the signal peptide; that stretch reads MNTFLFPTLCLLGVWAALAGG. Residues 22–94 constitute a propeptide that is removed on maturation; it reads VTVKDGEFSF…LERLETIAQD (73 aa). Disulfide bonds link C63/C76, C98/C106, and C101/C109.

This sequence belongs to the guanylin family.

The protein localises to the secreted. Endogenous activator of intestinal guanylate cyclase. It stimulates this enzyme through the same receptor binding region as the heat-stable enterotoxins. This is Guanylin (GUCA2A) from Sus scrofa (Pig).